The primary structure comprises 623 residues: Bifunctional enzyme CysN/CysC (623 aa).

Residues 1-450 (MQSVIAYLKQ…HVARARIKGQ (450 aa)) are sulfate adenylyltransferase. The 215-residue stretch at 14–228 (KPLLRFITCG…YLEALEPADV (215 aa)) folds into the tr-type G domain. Positions 23–30 (GSVDDGKS) are G1. Position 23–30 (23–30 (GSVDDGKS)) interacts with GTP. The tract at residues 81-85 (GITID) is G2. Residues 102–105 (DCPG) are G3. GTP-binding positions include 102–106 (DCPGH) and 157–160 (NKMD). A G4 region spans residues 157 to 160 (NKMD). The tract at residues 194–196 (SAL) is G5. An adenylyl-sulfate kinase region spans residues 451–623 (TPKVLWFTGL…VLSLLGVEGK (173 aa)). An ATP-binding site is contributed by 459-466 (GLSGAGKS). Ser-533 (phosphoserine intermediate) is an active-site residue.

In the C-terminal section; belongs to the APS kinase family. It in the N-terminal section; belongs to the TRAFAC class translation factor GTPase superfamily. Classic translation factor GTPase family. CysN/NodQ subfamily. In terms of assembly, heterodimer composed of CysD, the smaller subunit, and CysNC.

The enzyme catalyses sulfate + ATP + H(+) = adenosine 5'-phosphosulfate + diphosphate. It carries out the reaction adenosine 5'-phosphosulfate + ATP = 3'-phosphoadenylyl sulfate + ADP + H(+). It participates in sulfur metabolism; hydrogen sulfide biosynthesis; sulfite from sulfate: step 1/3. It functions in the pathway sulfur metabolism; hydrogen sulfide biosynthesis; sulfite from sulfate: step 2/3. Its function is as follows. With CysD forms the ATP sulfurylase (ATPS) that catalyzes the adenylation of sulfate producing adenosine 5'-phosphosulfate (APS) and diphosphate, the first enzymatic step in sulfur assimilation pathway. APS synthesis involves the formation of a high-energy phosphoric-sulfuric acid anhydride bond driven by GTP hydrolysis by CysN coupled to ATP hydrolysis by CysD. Functionally, APS kinase catalyzes the synthesis of activated sulfate. In Xylella fastidiosa (strain Temecula1 / ATCC 700964), this protein is Bifunctional enzyme CysN/CysC (cysNC).